A 383-amino-acid chain; its full sequence is Dimethylsulfoniopropionate lyase 6 (383 aa).

Belongs to the aspartate/glutamate racemases family. ALMA1 subfamily. In terms of assembly, homotetramer.

It carries out the reaction S,S-dimethyl-beta-propiothetin = acrylate + dimethyl sulfide + H(+). Its function is as follows. Mediates cleavage of dimethylsulfoniopropionate (DMSP) into dimethyl sulfide (DMS) and acrylate. DMS is the principal form by which sulfur is transported from oceans to the atmosphere and is a key component of the ocean sulfur cycle. This chain is Dimethylsulfoniopropionate lyase 6, found in Emiliania huxleyi (strain CCMP1516).